A 188-amino-acid polypeptide reads, in one-letter code: Large ribosomal subunit protein eL18B (188 aa).

Residues 153–188 are disordered; the sequence is GKAPGTPHSRTKPYVLSKGRKFERARGRRASRGYKN. A compositionally biased stretch (basic residues) spans 178 to 188; sequence RGRRASRGYKN.

This sequence belongs to the eukaryotic ribosomal protein eL18 family. As to quaternary structure, component of the large ribosomal subunit.

It is found in the cytoplasm. Its subcellular location is the cytosol. It localises to the rough endoplasmic reticulum. Component of the large ribosomal subunit. The ribosome is a large ribonucleoprotein complex responsible for the synthesis of proteins in the cell. The sequence is that of Large ribosomal subunit protein eL18B (rpl18-b) from Xenopus laevis (African clawed frog).